The following is a 139-amino-acid chain: D-ribose pyranase (139 aa).

H20 serves as the catalytic Proton donor. Substrate is bound by residues D28, H106, and 128-130 (YAN).

Belongs to the RbsD / FucU family. RbsD subfamily. In terms of assembly, homodecamer.

It localises to the cytoplasm. It carries out the reaction beta-D-ribopyranose = beta-D-ribofuranose. The protein operates within carbohydrate metabolism; D-ribose degradation; D-ribose 5-phosphate from beta-D-ribopyranose: step 1/2. Catalyzes the interconversion of beta-pyran and beta-furan forms of D-ribose. This Aeromonas hydrophila subsp. hydrophila (strain ATCC 7966 / DSM 30187 / BCRC 13018 / CCUG 14551 / JCM 1027 / KCTC 2358 / NCIMB 9240 / NCTC 8049) protein is D-ribose pyranase.